The following is a 505-amino-acid chain: Maturase K (505 aa).

It belongs to the intron maturase 2 family. MatK subfamily.

The protein resides in the plastid. It is found in the chloroplast. Usually encoded in the trnK tRNA gene intron. Probably assists in splicing its own and other chloroplast group II introns. In Micranthes integrifolia (Wholeleaf saxifrage), this protein is Maturase K.